Consider the following 195-residue polypeptide: Imidazoleglycerol-phosphate dehydratase (195 aa).

The protein belongs to the imidazoleglycerol-phosphate dehydratase family.

The protein localises to the cytoplasm. The enzyme catalyses D-erythro-1-(imidazol-4-yl)glycerol 3-phosphate = 3-(imidazol-4-yl)-2-oxopropyl phosphate + H2O. The protein operates within amino-acid biosynthesis; L-histidine biosynthesis; L-histidine from 5-phospho-alpha-D-ribose 1-diphosphate: step 6/9. This Exiguobacterium sp. (strain ATCC BAA-1283 / AT1b) protein is Imidazoleglycerol-phosphate dehydratase.